The sequence spans 84 residues: RNA-binding protein Hfq (84 aa).

Residues 11–71 form the Sm domain; sequence DTFLNHVRKN…ISTIMPGHPV (61 aa).

It belongs to the Hfq family. In terms of assembly, homohexamer.

Functionally, RNA chaperone that binds small regulatory RNA (sRNAs) and mRNAs to facilitate mRNA translational regulation in response to envelope stress, environmental stress and changes in metabolite concentrations. Also binds with high specificity to tRNAs. The sequence is that of RNA-binding protein Hfq from Methylorubrum populi (strain ATCC BAA-705 / NCIMB 13946 / BJ001) (Methylobacterium populi).